A 609-amino-acid chain; its full sequence is Adenine deaminase (609 aa).

Belongs to the metallo-dependent hydrolases superfamily. Adenine deaminase family. The cofactor is Mn(2+).

It catalyses the reaction adenine + H2O + H(+) = hypoxanthine + NH4(+). The protein is Adenine deaminase of Cenarchaeum symbiosum (strain A).